The following is a 3140-amino-acid chain: Genome polyprotein (3140 aa).

The Peptidase S30 domain maps to 165 to 308 (RMSEASLQLF…KEQSNEIIHY (144 aa)). Active-site for P1 proteinase activity residues include His216, Asp225, and Ser259. An Involved in interaction with stylet and aphid transmission motif is present at residues 360–363 (KITC). Positions 618-620 (PTK) match the Involved in virions binding and aphid transmission motif. Positions 644-766 (MFIAKAGYCY…DSNMKTYLVG (123 aa)) constitute a Peptidase C6 domain. Active-site for helper component proteinase activity residues include Cys652 and His725. Residues 1240-1392 (EVMHGSHQDI…TQKEVKVIVE (153 aa)) enclose the Helicase ATP-binding domain. 1253-1260 (GAVGSGKS) serves as a coordination point for ATP. The DECH box signature appears at 1342–1345 (DECH). The 160-residue stretch at 1411–1570 (DILKHGVNVL…GLPVMTNGVS (160 aa)) folds into the Helicase C-terminal domain. A Nuclear localization signal motif is present at residues 1897–1904 (KKGKSKGK). The residue at position 1919 (Tyr1919) is an O-(5'-phospho-RNA)-tyrosine. Positions 2050–2268 (SKSLFRGLRD…VCWGSLQLKR (219 aa)) constitute a Peptidase C4 domain. Active-site for nuclear inclusion protein A activity residues include His2095, Asp2130, and Cys2200. One can recognise a RdRp catalytic domain in the interval 2534–2658 (WIYCDADGSQ…AVHPAYESIY (125 aa)). Thr2829 and Thr2834 each carry an O-linked (GlcNAc) threonine; by host glycan. Residue Ser2835 is modified to Phosphoserine. 4 O-linked (GlcNAc) threonine; by host glycosylation sites follow: Thr2851, Thr2863, Thr2864, and Thr2868. The O-linked (GlcNAc) serine; by host glycan is linked to Ser2875. 3 positions are modified to phosphoserine: Ser2891, Ser2911, and Ser2928. Thr3064 and Thr3123 each carry phosphothreonine.

It belongs to the potyviridae genome polyprotein family. Interacts with host eIF4E protein (via cap-binding region); this interaction mediates the translation of the VPg-viral RNA conjugates. Part of a complex that comprises VPg, RNA, host EIF4E and EIF4G; this interaction mediates the translation of the VPg-viral RNA conjugates. In terms of processing, VPg is uridylylated by the polymerase and is covalently attached to the 5'-end of the genomic RNA. This uridylylated form acts as a nucleotide-peptide primer for the polymerase. Genome polyprotein of potyviruses undergoes post-translational proteolytic processing by the main proteinase NIa-pro resulting in the production of at least ten individual proteins. The P1 proteinase and the HC-pro cleave only their respective C-termini autocatalytically. 6K1 is essential for proper proteolytic separation of P3 from CI.

Its subcellular location is the host cytoplasmic vesicle. The protein localises to the host nucleus. The protein resides in the virion. The enzyme catalyses RNA(n) + a ribonucleoside 5'-triphosphate = RNA(n+1) + diphosphate. The catalysed reaction is Hydrolyzes glutaminyl bonds, and activity is further restricted by preferences for the amino acids in P6 - P1' that vary with the species of potyvirus, e.g. Glu-Xaa-Xaa-Tyr-Xaa-Gln-|-(Ser or Gly) for the enzyme from tobacco etch virus. The natural substrate is the viral polyprotein, but other proteins and oligopeptides containing the appropriate consensus sequence are also cleaved.. It carries out the reaction Hydrolyzes a Gly-|-Gly bond at its own C-terminus, commonly in the sequence -Tyr-Xaa-Val-Gly-|-Gly, in the processing of the potyviral polyprotein.. Its function is as follows. Required for aphid transmission and also has proteolytic activity. Only cleaves a Gly-Gly dipeptide at its own C-terminus. Interacts with virions and aphid stylets. Acts as a suppressor of RNA-mediated gene silencing, also known as post-transcriptional gene silencing (PTGS), a mechanism of plant viral defense that limits the accumulation of viral RNAs. May have RNA-binding activity. Functionally, has helicase activity. It may be involved in replication. In terms of biological role, indispensable for virus replication. Reduces the abundance of host transcripts related to jasmonic acid biosynthesis therefore altering the host defenses. In order to increase its own stability, decreases host protein degradation pathways. Indispensable for virus replication. Its function is as follows. Mediates the cap-independent, EIF4E-dependent translation of viral genomic RNAs. Binds to the cap-binding site of host EIF4E and thus interferes with the host EIF4E-dependent mRNA export and translation. VPg-RNA directly binds EIF4E and is a template for transcription. Also forms trimeric complexes with EIF4E-EIF4G, which are templates for translation. Functionally, has RNA-binding and proteolytic activities. In terms of biological role, an RNA-dependent RNA polymerase that plays an essential role in the virus replication. Involved in aphid transmission, cell-to-cell and systemis movement, encapsidation of the viral RNA and in the regulation of viral RNA amplification. The protein is Genome polyprotein of Prunus armeniaca (Apricot).